The chain runs to 220 residues: Iron-sulfur flavoprotein AF_1436 (220 aa).

[4Fe-4S] cluster contacts are provided by cysteine 47, cysteine 50, cysteine 53, and cysteine 59.

This sequence belongs to the SsuE family. Isf subfamily. As to quaternary structure, homodimer. FMN is required as a cofactor. It depends on [4Fe-4S] cluster as a cofactor.

Redox-active protein probably involved in electron transport. This Archaeoglobus fulgidus (strain ATCC 49558 / DSM 4304 / JCM 9628 / NBRC 100126 / VC-16) protein is Iron-sulfur flavoprotein AF_1436.